The primary structure comprises 399 residues: Beta sliding clamp (399 aa).

It belongs to the beta sliding clamp family. As to quaternary structure, forms a ring-shaped head-to-tail homodimer around DNA which binds and tethers DNA polymerases and other proteins to the DNA. The DNA replisome complex has a single clamp-loading complex (3 tau and 1 each of delta, delta', psi and chi subunits) which binds 3 Pol III cores (1 core on the leading strand and 2 on the lagging strand) each with a beta sliding clamp dimer. Additional proteins in the replisome are other copies of gamma, psi and chi, Ssb, DNA helicase and RNA primase.

Its subcellular location is the cytoplasm. Functionally, confers DNA tethering and processivity to DNA polymerases and other proteins. Acts as a clamp, forming a ring around DNA (a reaction catalyzed by the clamp-loading complex) which diffuses in an ATP-independent manner freely and bidirectionally along dsDNA. Initially characterized for its ability to contact the catalytic subunit of DNA polymerase III (Pol III), a complex, multichain enzyme responsible for most of the replicative synthesis in bacteria; Pol III exhibits 3'-5' exonuclease proofreading activity. The beta chain is required for initiation of replication as well as for processivity of DNA replication. The sequence is that of Beta sliding clamp (dnaN) from Mycolicibacterium paratuberculosis (strain ATCC BAA-968 / K-10) (Mycobacterium paratuberculosis).